The primary structure comprises 96 residues: Putative pterin-4-alpha-carbinolamine dehydratase (96 aa).

It belongs to the pterin-4-alpha-carbinolamine dehydratase family.

It carries out the reaction (4aS,6R)-4a-hydroxy-L-erythro-5,6,7,8-tetrahydrobiopterin = (6R)-L-erythro-6,7-dihydrobiopterin + H2O. The polypeptide is Putative pterin-4-alpha-carbinolamine dehydratase (Prochlorococcus marinus subsp. pastoris (strain CCMP1986 / NIES-2087 / MED4)).